The following is a 526-amino-acid chain: MQRPIIIRRALLSVSDKTNICELAKSLLKRGVQLISTNGTARLLVNAGIHVTEVSNYTGFPEIMDGRVKTLHPKIHGGILARRNIDDTIMQQYKIEHIDMVVVNLYPFAEVVASATCNHEKVVENIDIGGTALLRSAAKNYSNVVVVVSINDYISIINEIDCNNGAVSLETRLNLAIKAFQHTATYDSQIKDYFTSQVYTDSSKCSSIFPPILNINFVKKQDMRYGENQHQLAAFYLDTRNKEKSIATTKQLQGRALSYNNIADADAALECVKEFSEPACVIVKHINPCSVAMGKTILVAYQRAYETDPTSAFGGVIAFNRSLDLCTAQEIIARQFIEVIIAPTVDQEALLILAKKKNIRVLSSGQWNKPIPNLNFRQVNGGLLVQERDLVMINLHDLRIVSQRQPTTMEIQDALFCWKVVKFVKSNAIVYARNQRTIGIGAGQMSRIDSAKIASIKAIDNKLNIRGSTMASDAFFPFRDGLDSAAKVGVSCVIQPGGSIRDQEVITAANEHNIAMIFTNIRHFRH.

One can recognise an MGS-like domain in the interval 1–148 (MQRPIIIRRA…KNYSNVVVVV (148 aa)).

It belongs to the PurH family.

The catalysed reaction is (6R)-10-formyltetrahydrofolate + 5-amino-1-(5-phospho-beta-D-ribosyl)imidazole-4-carboxamide = 5-formamido-1-(5-phospho-D-ribosyl)imidazole-4-carboxamide + (6S)-5,6,7,8-tetrahydrofolate. The enzyme catalyses IMP + H2O = 5-formamido-1-(5-phospho-D-ribosyl)imidazole-4-carboxamide. It functions in the pathway purine metabolism; IMP biosynthesis via de novo pathway; 5-formamido-1-(5-phospho-D-ribosyl)imidazole-4-carboxamide from 5-amino-1-(5-phospho-D-ribosyl)imidazole-4-carboxamide (10-formyl THF route): step 1/1. The protein operates within purine metabolism; IMP biosynthesis via de novo pathway; IMP from 5-formamido-1-(5-phospho-D-ribosyl)imidazole-4-carboxamide: step 1/1. The sequence is that of Bifunctional purine biosynthesis protein PurH from Baumannia cicadellinicola subsp. Homalodisca coagulata.